The sequence spans 149 residues: Protein RhiC (149 aa).

Residues 1–23 (MTATLRAFGWLAAFALTVTFAQG) form the signal peptide.

It is found in the periplasm. May be involved in plant-microbe interaction. This is Protein RhiC (rhiC) from Rhizobium leguminosarum bv. viciae.